Here is a 525-residue protein sequence, read N- to C-terminus: Cytochrome P450 monooxygenase tpcC (525 aa).

Residues 13–33 (LPVTLVSLLVGSIFYFCYLTV) form a helical membrane-spanning segment. A heme-binding site is contributed by cysteine 457.

The protein belongs to the cytochrome P450 family. Heme is required as a cofactor.

It localises to the membrane. It participates in secondary metabolite biosynthesis; terpenoid biosynthesis. Functionally, cytochrome P450 monooxygenase; part of the gene cluster that mediates the biosynthesis of terpestacin. The bifunctional terpene synthase tpcA converts isopentenyl diphosphate (IPP) and dimethylallyl diphosphate (DMAPP) into the sesterterpene preterpestacin I. The C-terminal prenyltransferase (PT) domain of tpcA catalyzes formation of GFPP, whereas the N-terminal terpene cyclase (TC) domain catalyzes the cyclization of GFPP into preterpestacin I. The cytochrome P450 monooxygenase tpcB then hydroxylates preterpestacin I to yield 24-hydroxypreterpstacin I (renamed as preterpestacin II) whereas the cytochrome P450 monooxygenase tpcC further hydroxylates preterpestacin II to yield 16,17-dihydroxypreterpestacin II (renamed as preterpestacin III). Finally, the FAD-dependent monooxygenase tpcD converts preterpestacin III into terpestacin. In Cochliobolus heterostrophus (strain C5 / ATCC 48332 / race O) (Southern corn leaf blight fungus), this protein is Cytochrome P450 monooxygenase tpcC.